The primary structure comprises 209 residues: V-type ATP synthase subunit D 2 (209 aa).

Belongs to the V-ATPase D subunit family.

Functionally, produces ATP from ADP in the presence of a proton gradient across the membrane. This Treponema pallidum (strain Nichols) protein is V-type ATP synthase subunit D 2 (atpD2).